The chain runs to 260 residues: Thiazole synthase (260 aa).

The Schiff-base intermediate with DXP role is filled by Lys100. 1-deoxy-D-xylulose 5-phosphate is bound by residues Gly162, 188–189 (AG), and 210–211 (NT).

It belongs to the ThiG family. In terms of assembly, homotetramer. Forms heterodimers with either ThiH or ThiS.

The protein resides in the cytoplasm. The catalysed reaction is [ThiS sulfur-carrier protein]-C-terminal-Gly-aminoethanethioate + 2-iminoacetate + 1-deoxy-D-xylulose 5-phosphate = [ThiS sulfur-carrier protein]-C-terminal Gly-Gly + 2-[(2R,5Z)-2-carboxy-4-methylthiazol-5(2H)-ylidene]ethyl phosphate + 2 H2O + H(+). It participates in cofactor biosynthesis; thiamine diphosphate biosynthesis. Functionally, catalyzes the rearrangement of 1-deoxy-D-xylulose 5-phosphate (DXP) to produce the thiazole phosphate moiety of thiamine. Sulfur is provided by the thiocarboxylate moiety of the carrier protein ThiS. In vitro, sulfur can be provided by H(2)S. The chain is Thiazole synthase from Wolinella succinogenes (strain ATCC 29543 / DSM 1740 / CCUG 13145 / JCM 31913 / LMG 7466 / NCTC 11488 / FDC 602W) (Vibrio succinogenes).